The primary structure comprises 343 residues: tRNA N6-adenosine threonylcarbamoyltransferase (343 aa).

The Fe cation site is built by histidine 120 and histidine 124. Substrate contacts are provided by residues 142 to 146 (VVSGG), aspartate 175, glycine 188, aspartate 192, and asparagine 281. Aspartate 310 lines the Fe cation pocket.

This sequence belongs to the KAE1 / TsaD family. It depends on Fe(2+) as a cofactor.

It is found in the cytoplasm. It catalyses the reaction L-threonylcarbamoyladenylate + adenosine(37) in tRNA = N(6)-L-threonylcarbamoyladenosine(37) in tRNA + AMP + H(+). Its function is as follows. Required for the formation of a threonylcarbamoyl group on adenosine at position 37 (t(6)A37) in tRNAs that read codons beginning with adenine. Is involved in the transfer of the threonylcarbamoyl moiety of threonylcarbamoyl-AMP (TC-AMP) to the N6 group of A37, together with TsaE and TsaB. TsaD likely plays a direct catalytic role in this reaction. The chain is tRNA N6-adenosine threonylcarbamoyltransferase from Bacillus thuringiensis subsp. konkukian (strain 97-27).